The following is a 555-amino-acid chain: CTP synthase (555 aa).

The interval Met-1–Ile-271 is amidoligase domain. Ser-19 contributes to the CTP binding site. UTP is bound at residue Ser-19. ATP is bound by residues Ser-20–Leu-25 and Asp-77. Mg(2+)-binding residues include Asp-77 and Glu-145. Residues Asp-152–Glu-154, Lys-192–Gln-197, and Lys-228 contribute to the CTP site. UTP-binding positions include Lys-192–Gln-197 and Lys-228. The Glutamine amidotransferase type-1 domain occupies Arg-297–Ala-537. L-glutamine is bound at residue Gly-358. The active-site Nucleophile; for glutamine hydrolysis is the Cys-385. L-glutamine-binding positions include Leu-386–Gln-389, Glu-409, and Arg-466. Residues His-510 and Glu-512 contribute to the active site. The segment at Arg-535–Gly-555 is disordered.

The protein belongs to the CTP synthase family. In terms of assembly, homotetramer.

It catalyses the reaction UTP + L-glutamine + ATP + H2O = CTP + L-glutamate + ADP + phosphate + 2 H(+). It carries out the reaction L-glutamine + H2O = L-glutamate + NH4(+). The enzyme catalyses UTP + NH4(+) + ATP = CTP + ADP + phosphate + 2 H(+). It functions in the pathway pyrimidine metabolism; CTP biosynthesis via de novo pathway; CTP from UDP: step 2/2. Its activity is regulated as follows. Allosterically activated by GTP, when glutamine is the substrate; GTP has no effect on the reaction when ammonia is the substrate. The allosteric effector GTP functions by stabilizing the protein conformation that binds the tetrahedral intermediate(s) formed during glutamine hydrolysis. Inhibited by the product CTP, via allosteric rather than competitive inhibition. In terms of biological role, catalyzes the ATP-dependent amination of UTP to CTP with either L-glutamine or ammonia as the source of nitrogen. Regulates intracellular CTP levels through interactions with the four ribonucleotide triphosphates. In Anaeromyxobacter sp. (strain K), this protein is CTP synthase.